The following is a 369-amino-acid chain: Molybdenum import ATP-binding protein ModC 1 (369 aa).

The ABC transporter domain maps to 10-240 (KGYIEVAFNG…PALASRSEAA (231 aa)). Residue 42 to 49 (GPPGCGKT) coordinates ATP. The Mop domain maps to 297–367 (ASSILNVFRA…ELCGKLGDDG (71 aa)).

This sequence belongs to the ABC transporter superfamily. Molybdate importer (TC 3.A.1.8) family. As to quaternary structure, the complex is composed of two ATP-binding proteins (ModC), two transmembrane proteins (ModB) and a solute-binding protein (ModA).

It localises to the cell inner membrane. The enzyme catalyses molybdate(out) + ATP + H2O = molybdate(in) + ADP + phosphate + H(+). In terms of biological role, part of the ABC transporter complex ModABC involved in molybdenum import. Responsible for energy coupling to the transport system. This is Molybdenum import ATP-binding protein ModC 1 from Bradyrhizobium diazoefficiens (strain JCM 10833 / BCRC 13528 / IAM 13628 / NBRC 14792 / USDA 110).